The chain runs to 116 residues: NADH-ubiquinone oxidoreductase chain 3 (116 aa).

The next 3 helical transmembrane spans lie at L3–F23, F56–L76, and G87–W107.

It belongs to the complex I subunit 3 family.

It is found in the mitochondrion membrane. The enzyme catalyses a ubiquinone + NADH + 5 H(+)(in) = a ubiquinol + NAD(+) + 4 H(+)(out). Core subunit of the mitochondrial membrane respiratory chain NADH dehydrogenase (Complex I) that is believed to belong to the minimal assembly required for catalysis. Complex I functions in the transfer of electrons from NADH to the respiratory chain. The immediate electron acceptor for the enzyme is believed to be ubiquinone. The protein is NADH-ubiquinone oxidoreductase chain 3 (MT-ND3) of Carassius auratus (Goldfish).